Consider the following 157-residue polypeptide: Probable cyclic pyranopterin monophosphate synthase (157 aa).

Residues 75–77 (MCH) and 111–112 (ME) each bind substrate. The active site involves Asp-126.

It belongs to the MoaC family. As to quaternary structure, homohexamer; trimer of dimers.

The enzyme catalyses (8S)-3',8-cyclo-7,8-dihydroguanosine 5'-triphosphate = cyclic pyranopterin phosphate + diphosphate. It participates in cofactor biosynthesis; molybdopterin biosynthesis. In terms of biological role, catalyzes the conversion of (8S)-3',8-cyclo-7,8-dihydroguanosine 5'-triphosphate to cyclic pyranopterin monophosphate (cPMP). This chain is Probable cyclic pyranopterin monophosphate synthase, found in Methanosarcina mazei (strain ATCC BAA-159 / DSM 3647 / Goe1 / Go1 / JCM 11833 / OCM 88) (Methanosarcina frisia).